A 343-amino-acid polypeptide reads, in one-letter code: Cytoplasmic tRNA 2-thiolation protein 1 (343 aa).

This sequence belongs to the TtcA family. CTU1/NCS6/ATPBD3 subfamily.

It localises to the cytoplasm. It functions in the pathway tRNA modification; 5-methoxycarbonylmethyl-2-thiouridine-tRNA biosynthesis. Functionally, plays a central role in 2-thiolation of mcm(5)S(2)U at tRNA wobble positions of tRNA(Lys), tRNA(Glu) and tRNA(Gln). Directly binds tRNAs and probably acts by catalyzing adenylation of tRNAs, an intermediate required for 2-thiolation. It is unclear whether it acts as a sulfurtransferase that transfers sulfur from thiocarboxylated URM1 onto the uridine of tRNAs at wobble position. The sequence is that of Cytoplasmic tRNA 2-thiolation protein 1 from Drosophila melanogaster (Fruit fly).